The chain runs to 119 residues: MNKILSSTVCFGLLTLLSVLSFLQSVHGRPYLTQGNEIFPDKKYTNREELLLALLNKNFDFQRPFNTDLALPNKLEELNQLEKLKEQLVEEKDSETSYAVDGLFSSHPSKRACFWKYCV.

The signal sequence occupies residues 1 to 28 (MNKILSSTVCFGLLTLLSVLSFLQSVHG). The propeptide occupies 29–109 (RPYLTQGNEI…VDGLFSSHPS (81 aa)). A disulfide bridge links C113 with C118.

It belongs to the urotensin-2 family.

The protein resides in the secreted. In terms of biological role, potent vasoconstrictor. The sequence is that of Urotensin-2B (UTS2B) from Homo sapiens (Human).